A 489-amino-acid polypeptide reads, in one-letter code: Lysine--tRNA ligase (489 aa).

Positions 399 and 406 each coordinate Mg(2+).

Belongs to the class-II aminoacyl-tRNA synthetase family. In terms of assembly, homodimer. Mg(2+) is required as a cofactor.

It is found in the cytoplasm. It carries out the reaction tRNA(Lys) + L-lysine + ATP = L-lysyl-tRNA(Lys) + AMP + diphosphate. The chain is Lysine--tRNA ligase from Malacoplasma penetrans (strain HF-2) (Mycoplasma penetrans).